A 339-amino-acid polypeptide reads, in one-letter code: uncharacterized protein (339 aa).

28 to 35 contributes to the ATP binding site; sequence GPINSGKT.

The protein belongs to the archaeal ATPase family.

This is an uncharacterized protein from Pyrococcus abyssi (strain GE5 / Orsay).